The following is a 79-amino-acid chain: Succinate dehydrogenase assembly factor 1, mitochondrial (79 aa).

This sequence belongs to the complex I LYR family. SDHAF1 subfamily. In terms of assembly, interacts with SDH2 within an SDH1-SDH2 subcomplex.

Its subcellular location is the mitochondrion matrix. Functionally, plays an essential role in the assembly of succinate dehydrogenase (SDH), an enzyme complex (also referred to as respiratory complex II) that is a component of both the tricarboxylic acid (TCA) cycle and the mitochondrial electron transport chain, and which couples the oxidation of succinate to fumarate with the reduction of ubiquinone (coenzyme Q) to ubiquinol. Promotes maturation of the iron-sulfur protein subunit SDH2 of the SDH catalytic dimer, protecting it from the deleterious effects of oxidants. Acts together with SDHAF3 (SDH7). This is Succinate dehydrogenase assembly factor 1, mitochondrial from Saccharomyces cerevisiae (strain YJM789) (Baker's yeast).